Reading from the N-terminus, the 323-residue chain is tRNA dimethylallyltransferase (323 aa).

Residue 21 to 28 (GPTACNKS) coordinates ATP. Substrate is bound at residue 23–28 (TACNKS). 3 interaction with substrate tRNA regions span residues 46 to 49 (DSAL), 171 to 175 (QRVLR), and 252 to 257 (RCVGYR).

This sequence belongs to the IPP transferase family. Monomer. Mg(2+) serves as cofactor.

It carries out the reaction adenosine(37) in tRNA + dimethylallyl diphosphate = N(6)-dimethylallyladenosine(37) in tRNA + diphosphate. Functionally, catalyzes the transfer of a dimethylallyl group onto the adenine at position 37 in tRNAs that read codons beginning with uridine, leading to the formation of N6-(dimethylallyl)adenosine (i(6)A). The polypeptide is tRNA dimethylallyltransferase (Buchnera aphidicola subsp. Baizongia pistaciae (strain Bp)).